Reading from the N-terminus, the 598-residue chain is F-box/WD repeat-containing protein 8 (598 aa).

M1 carries the post-translational modification N-acetylmethionine. The tract at residues 17–93 is disordered; it reads LAQAQAPKKR…RSPLAREGAG (77 aa). A compositionally biased stretch (basic and acidic residues) spans 29 to 40; the sequence is PEAAERRARRPE. Residues 61–71 are compositionally biased toward low complexity; sequence EGAGRPPAARA. Phosphoserine occurs at positions 83 and 85. The F-box domain maps to 113 to 159; it reads PFFDIQLPYELAINIFQYLDRKELGRCAQVSKTWKVIAEDEVLWYRL. 8 WD repeats span residues 201-250, 259-299, 300-340, 341-383, 384-429, 430-475, 476-513, and 514-561; these read AVSE…LESE, QPNV…FEHD, ARIQ…AEFE, VPKL…LLYA, HGPP…LKLG, NVLR…SAHQ, LRVSAVQMDDWKIVSGGEEGLVSVWDYRMNQKLWEVYS, and GHPV…AYEF.

Component of the Cul7-RING(FBXW8) complex consisting of CUL7, RBX1, SKP1 and FBXW8; within the complex interacts with CUL7 and SKP1. Interacts with GLMN isoform 1. Interacts with OBSL1, CUL1, CUL2, CCT6B, PFDN5, CCT2, CCT3, CCT6A, CCT7, VBP1, CCDC8, ARF1, TRIP13, PDCD5 and GORASP1. Interacts with MAP4K1/HPK1 (when autophosphorylated). Associated component of the 3M complex. Interacts with POUF51 (when phosphorylated on 'Ser-355'). Phosphorylation at Ser-85 by mTORC2 promotes FBXW8 stabilization, allowing its translocation to the cytosol in response to insulin.

Its subcellular location is the cytoplasm. The protein localises to the perinuclear region. The protein resides in the golgi apparatus. It participates in protein modification; protein ubiquitination. Functionally, substrate-recognition component of the Cul7-RING(FBXW8) ubiquitin ligase complex, which mediates the ubiquitination and subsequent proteasomal degradation of target proteins. The Cul7-RING(FBXW8) complex mediates ubiquitination and consequent degradation of GORASP1, acting as a component of the ubiquitin ligase pathway that regulates Golgi morphogenesis and dendrite patterning in brain. Mediates ubiquitination and degradation of IRS1 in a mTOR-dependent manner: the Cul7-RING(FBXW8) complex recognizes and binds IRS1 previously phosphorylated by S6 kinase (RPS6KB1 or RPS6KB2). The Cul7-RING(FBXW8) complex also mediates ubiquitination of MAP4K1/HPK1: recognizes and binds autophosphorylated MAP4K1/HPK1, leading to its degradation, thereby affecting cell proliferation and differentiation. The Cul7-RING(FBXW8) complex also mediates ubiquitination of phosphorylated cyclin-D1 (CCND1). The Cul7-RING(FBXW8) complex is however not a major regulator of CCND1 stability during the G1/S transition. Associated component of the 3M complex, suggesting that it mediates some of 3M complex functions. The polypeptide is F-box/WD repeat-containing protein 8 (Homo sapiens (Human)).